Reading from the N-terminus, the 95-residue chain is Large ribosomal subunit protein eL30 (95 aa).

It belongs to the eukaryotic ribosomal protein eL30 family.

This is Large ribosomal subunit protein eL30 from Methanospirillum hungatei JF-1 (strain ATCC 27890 / DSM 864 / NBRC 100397 / JF-1).